The primary structure comprises 101 residues: Large ribosomal subunit protein uL24 (101 aa).

The protein belongs to the universal ribosomal protein uL24 family. Part of the 50S ribosomal subunit.

Functionally, one of two assembly initiator proteins, it binds directly to the 5'-end of the 23S rRNA, where it nucleates assembly of the 50S subunit. In terms of biological role, one of the proteins that surrounds the polypeptide exit tunnel on the outside of the subunit. The sequence is that of Large ribosomal subunit protein uL24 from Streptococcus uberis (strain ATCC BAA-854 / 0140J).